The following is a 242-amino-acid chain: MMKTLGAVLSLSLTLLSFGGAHAATMSFKNNCPYTVWPASFGNPQLSTTGFELASQASFQLDTPVPWSGRFWARTRCSTDASGKFVCETADCDSGQLMCNGKTGIPPATLAEFTIAAGGGQDFYDVSLVDGFNLPMSVTPQGGTGTCKMGSCAANVNLVCPSELQKIGSDGSVVACLSACVKFGEPQYCCTPPQETKEKCPPTNYSQIFHEQCPDAYSYAFDDNKGLFTCSGGPNYLITFCP.

Positions 1 to 23 (MMKTLGAVLSLSLTLLSFGGAHA) are cleaved as a signal peptide. 8 disulfide bridges follow: Cys-32–Cys-241, Cys-77–Cys-87, Cys-92–Cys-99, Cys-147–Cys-230, Cys-152–Cys-213, Cys-160–Cys-176, Cys-180–Cys-189, and Cys-190–Cys-200.

This sequence belongs to the thaumatin family. Preferentially expressed in the abscission zone of fruit. Also expressed in leaf abscission zone.

It is found in the secreted. Functionally, may be involved in protecting plant tissues from pathogen infection. This is Thaumatin-like protein 2 from Prunus persica (Peach).